The following is a 339-amino-acid chain: MNIREAIAAVVARRDLTQAEAASVMEEIMSGTATPAQIGAFLTALHMKGETDAEIAGMAAVMREKATHVYFDGPVIDTCGTGGDGAHTFNISTTAAFVAAGAGLTVAKHGNRAMSSVCGSADVLEGLGVQIELDAEGVARCLREAGIGFMFAPKFHPAMRFAGPVRREIGIRTVFNILGPLTNPARARYQVLGVASAALAEKLAYALSRLDTVHALVVHGDGGVDELTLSGPNLIFDVRAGQAPRQMLVAPEDVGLPRAPQDALRGGDVAYNVAIVRAILSGEEHGPRRDVVLFNAAAAMVAGDLAPDLATGVAMARHSIDSGRALERLNQMIAVSRGE.

5-phospho-alpha-D-ribose 1-diphosphate contacts are provided by residues glycine 80, 83–84 (GD), threonine 88, 90–93 (NIST), 108–116 (KHGNRAMSS), and serine 120. Glycine 80 contacts anthranilate. Serine 92 contacts Mg(2+). An anthranilate-binding site is contributed by asparagine 111. Anthranilate is bound at residue arginine 166. Mg(2+) is bound by residues aspartate 225 and glutamate 226.

It belongs to the anthranilate phosphoribosyltransferase family. In terms of assembly, homodimer. The cofactor is Mg(2+).

It catalyses the reaction N-(5-phospho-beta-D-ribosyl)anthranilate + diphosphate = 5-phospho-alpha-D-ribose 1-diphosphate + anthranilate. It functions in the pathway amino-acid biosynthesis; L-tryptophan biosynthesis; L-tryptophan from chorismate: step 2/5. Catalyzes the transfer of the phosphoribosyl group of 5-phosphorylribose-1-pyrophosphate (PRPP) to anthranilate to yield N-(5'-phosphoribosyl)-anthranilate (PRA). The polypeptide is Anthranilate phosphoribosyltransferase (Chloroflexus aurantiacus (strain ATCC 29366 / DSM 635 / J-10-fl)).